The chain runs to 84 residues: U8-theraphotoxin-Hhn1g (84 aa).

Residues 1-21 form the signal peptide; it reads MKVVLLVCLVWMMAMMELVSC. 5 disulfide bridges follow: Cys23/Cys35, Cys29/Cys44, Cys34/Cys67, Cys54/Cys75, and Cys69/Cys81.

The protein belongs to the AVIT (prokineticin) family. Expressed by the venom gland.

The protein resides in the secreted. The chain is U8-theraphotoxin-Hhn1g from Cyriopagopus hainanus (Chinese bird spider).